We begin with the raw amino-acid sequence, 273 residues long: Nitrogenase iron protein 5 (273 aa).

Residue 8–15 (GKGGIGKS) participates in ATP binding. Position 94 (C94) interacts with [4Fe-4S] cluster. R97 bears the ADP-ribosylarginine; by dinitrogenase reductase ADP-ribosyltransferase mark. Residue C129 participates in [4Fe-4S] cluster binding.

Belongs to the NifH/BchL/ChlL family. As to quaternary structure, homodimer. [4Fe-4S] cluster serves as cofactor. Post-translationally, the reversible ADP-ribosylation of Arg-97 inactivates the nitrogenase reductase and regulates nitrogenase activity.

The enzyme catalyses N2 + 8 reduced [2Fe-2S]-[ferredoxin] + 16 ATP + 16 H2O = H2 + 8 oxidized [2Fe-2S]-[ferredoxin] + 2 NH4(+) + 16 ADP + 16 phosphate + 6 H(+). Functionally, the key enzymatic reactions in nitrogen fixation are catalyzed by the nitrogenase complex, which has 2 components: the iron protein and the molybdenum-iron protein. The polypeptide is Nitrogenase iron protein 5 (nifH5) (Clostridium pasteurianum).